We begin with the raw amino-acid sequence, 299 residues long: Protease HtpX homolog (299 aa).

The next 2 helical transmembrane spans lie at 14–34 and 39–59; these read ILVM…VGYL and ATGG…IMVG. H144 lines the Zn(2+) pocket. E145 is an active-site residue. H148 is a binding site for Zn(2+). 2 helical membrane-spanning segments follow: residues 159–179 and 196–216; these read IALA…NFMW and VFAI…ATMV. E225 contributes to the Zn(2+) binding site.

The protein belongs to the peptidase M48B family. Zn(2+) serves as cofactor.

The protein localises to the cell membrane. In Limosilactobacillus fermentum (strain NBRC 3956 / LMG 18251) (Lactobacillus fermentum), this protein is Protease HtpX homolog.